The sequence spans 174 residues: Large ribosomal subunit protein uL10 (174 aa).

Belongs to the universal ribosomal protein uL10 family. Part of the ribosomal stalk of the 50S ribosomal subunit. The N-terminus interacts with L11 and the large rRNA to form the base of the stalk. The C-terminus forms an elongated spine to which L12 dimers bind in a sequential fashion forming a multimeric L10(L12)X complex.

Its function is as follows. Forms part of the ribosomal stalk, playing a central role in the interaction of the ribosome with GTP-bound translation factors. The chain is Large ribosomal subunit protein uL10 from Trichlorobacter lovleyi (strain ATCC BAA-1151 / DSM 17278 / SZ) (Geobacter lovleyi).